The sequence spans 429 residues: Polypyrimidine tract-binding protein homolog 2 (429 aa).

At S2 the chain carries N-acetylserine. 3 consecutive RRM domains span residues 18 to 96 (KVLH…YSNR), 110 to 197 (GNVL…YSAH), and 243 to 323 (SNVL…YSRH). Positions 331-429 (NNDRSRDYTM…QHYGGPGPMH (99 aa)) are disordered. Positions 367-381 (GGSHHQQQQQPQGGW) are enriched in low complexity. Over residues 382–397 (VQPGGQGSMGMGGGGH) the composition is skewed to gly residues.

Its subcellular location is the nucleus. Its function is as follows. Plays a role in pre-mRNA splicing. Binds to the polypyrimidine tract of introns. May promote the binding of U2 snRNP to pre-mRNA. The sequence is that of Polypyrimidine tract-binding protein homolog 2 from Arabidopsis thaliana (Mouse-ear cress).